The sequence spans 154 residues: L-alanine exporter AlaE (154 aa).

4 helical membrane-spanning segments follow: residues 21–41 (FAMVVYCTVVNMLIEIFLSGM), 51–71 (LVAIPVNILIACPYGIYRDFF), 90–110 (ILAYVTFQSPVYAAILWVIGA), and 115–135 (IVAAVSSNMVISMMMGAVYGY).

It belongs to the AlaE exporter family.

It is found in the cell inner membrane. Its function is as follows. Exports L-alanine. This is L-alanine exporter AlaE from Escherichia fergusonii (strain ATCC 35469 / DSM 13698 / CCUG 18766 / IAM 14443 / JCM 21226 / LMG 7866 / NBRC 102419 / NCTC 12128 / CDC 0568-73).